Reading from the N-terminus, the 552-residue chain is Glucose-6-phosphate isomerase (552 aa).

Glu357 functions as the Proton donor in the catalytic mechanism. Active-site residues include His388 and Lys516. The disordered stretch occupies residues 525 to 552; that stretch reads ELASTKPPKHDSSTNALIERYRTRGCRS.

This sequence belongs to the GPI family.

The protein resides in the cytoplasm. It carries out the reaction alpha-D-glucose 6-phosphate = beta-D-fructose 6-phosphate. The protein operates within carbohydrate biosynthesis; gluconeogenesis. Its pathway is carbohydrate degradation; glycolysis; D-glyceraldehyde 3-phosphate and glycerone phosphate from D-glucose: step 2/4. In terms of biological role, catalyzes the reversible isomerization of glucose-6-phosphate to fructose-6-phosphate. The polypeptide is Glucose-6-phosphate isomerase (Laribacter hongkongensis (strain HLHK9)).